The following is a 402-amino-acid chain: Bone morphogenetic protein 8A (402 aa).

A signal peptide spans 1–19 (MAARPGPLWLLGLTLCALG). Positions 20 to 263 (GGGPGLRPPP…ASPSPIRTPR (244 aa)) are excised as a propeptide. Residues asparagine 158 and asparagine 343 are each glycosylated (N-linked (GlcNAc...) asparagine). Cystine bridges form between cysteine 301-cysteine 367, cysteine 330-cysteine 399, and cysteine 334-cysteine 401.

Belongs to the TGF-beta family. In terms of assembly, homodimer; disulfide-linked.

It localises to the secreted. Induces cartilage and bone formation. May be the osteoinductive factor responsible for the phenomenon of epithelial osteogenesis. Plays a role in calcium regulation and bone homeostasis. Signaling protein involved in regulation of thermogenesis and energy balance. Proposed to increase the peripheral response of brown adipose tissue (BAT) to adrenergic stimulation while acting centrally in the hypothalamus to increase sympathetic output to BAT. In terms of biological role, growth factor of the TGF-beta superfamily that plays important role in various biological processes, including spermatogenesis, osteogenesis, steroidogenesis as well as regulation of energy balance. Initiates the canonical BMP signaling cascade by associating with type I receptor BMPR1A and type II receptor BMPR2. Once all three components are bound together in a complex at the cell surface, BMPR2 phosphorylates and activates BMPR1A. In turn, BMPR1A propagates signal by phosphorylating SMAD1/5/8 that travel to the nucleus and act as activators and repressors of transcription of target genes. In addition, activates the SMAD2/3 pathway. The chain is Bone morphogenetic protein 8A (BMP8A) from Homo sapiens (Human).